An 83-amino-acid polypeptide reads, in one-letter code: RNA-binding protein Hfq (83 aa).

Residues 11-71 form the Sm domain; the sequence is DVFLNYIRKN…ISTIMPASPV (61 aa).

This sequence belongs to the Hfq family. In terms of assembly, homohexamer.

In terms of biological role, RNA chaperone that binds small regulatory RNA (sRNAs) and mRNAs to facilitate mRNA translational regulation in response to envelope stress, environmental stress and changes in metabolite concentrations. Also binds with high specificity to tRNAs. This Rhodospirillum rubrum (strain ATCC 11170 / ATH 1.1.1 / DSM 467 / LMG 4362 / NCIMB 8255 / S1) protein is RNA-binding protein Hfq.